A 265-amino-acid chain; its full sequence is Hydroxyethylthiazole kinase (265 aa).

M50 is a binding site for substrate. ATP contacts are provided by R125 and T171. G198 contributes to the substrate binding site.

The protein belongs to the Thz kinase family. Mg(2+) is required as a cofactor.

The catalysed reaction is 5-(2-hydroxyethyl)-4-methylthiazole + ATP = 4-methyl-5-(2-phosphooxyethyl)-thiazole + ADP + H(+). It functions in the pathway cofactor biosynthesis; thiamine diphosphate biosynthesis; 4-methyl-5-(2-phosphoethyl)-thiazole from 5-(2-hydroxyethyl)-4-methylthiazole: step 1/1. In terms of biological role, catalyzes the phosphorylation of the hydroxyl group of 4-methyl-5-beta-hydroxyethylthiazole (THZ). The sequence is that of Hydroxyethylthiazole kinase from Salmonella paratyphi C (strain RKS4594).